The chain runs to 291 residues: Elongation factor Ts (291 aa).

The segment at 79–82 (TDFV) is involved in Mg(2+) ion dislocation from EF-Tu.

This sequence belongs to the EF-Ts family.

The protein resides in the cytoplasm. Associates with the EF-Tu.GDP complex and induces the exchange of GDP to GTP. It remains bound to the aminoacyl-tRNA.EF-Tu.GTP complex up to the GTP hydrolysis stage on the ribosome. This Ruegeria pomeroyi (strain ATCC 700808 / DSM 15171 / DSS-3) (Silicibacter pomeroyi) protein is Elongation factor Ts.